The chain runs to 238 residues: Serine protease SplA (238 aa).

A signal peptide spans 1–38 (MNKNVMVKGLTALTILTILTSLGFAENISNQPHSIAKA). Catalysis depends on charge relay system residues H77, D116, and S192.

Belongs to the peptidase S1B family.

The protein localises to the secreted. This is Serine protease SplA (splA) from Staphylococcus aureus (strain COL).